A 121-amino-acid chain; its full sequence is Non-specific lipid-transfer protein 3 (121 aa).

The signal sequence occupies residues 1–28; the sequence is MAGARRTMALVALVAVVAAAVVAERASA. Disulfide bonds link Cys-32-Cys-80, Cys-42-Cys-57, Cys-58-Cys-103, and Cys-78-Cys-117.

It belongs to the plant LTP family.

Its function is as follows. Plant non-specific lipid-transfer proteins transfer phospholipids as well as galactolipids across membranes. May play a role in wax or cutin deposition in the cell walls of expanding epidermal cells and certain secretory tissues. May possess an antifungal activity and protect the plant against pathogens. In Oryza sativa subsp. indica (Rice), this protein is Non-specific lipid-transfer protein 3 (LTP110-A).